We begin with the raw amino-acid sequence, 2492 residues long: Talin-A (2492 aa).

Positions 84–365 (RPQKFKLLDG…GYIEIIMKAR (282 aa)) constitute an FERM domain. The 243-residue stretch at 2250 to 2492 (EEDNVLEDLE…NSRKQNYNKN (243 aa)) folds into the I/LWEQ domain.

It localises to the cytoplasm. The protein localises to the cytoskeleton. The protein resides in the cell cortex. Actin-binding protein that may be involved in the control of cell motility and chemotaxis. The protein is Talin-A (talA) of Dictyostelium discoideum (Social amoeba).